A 540-amino-acid polypeptide reads, in one-letter code: ADP,ATP carrier protein 2 (540 aa).

Helical transmembrane passes span 23-43, 61-81, 93-113, 150-170, 185-205, 222-242, 292-312, 334-354, 361-381, 389-409, 455-475, and 477-497; these read FSKF…YALL, VIPF…TMIY, VFIS…TVIY, LYYV…FWGV, ALIN…SLWL, EVLL…LYLY, LLGI…FEVV, ITTL…GQTI, IGAL…FGAI, MIFG…LGGV, SGGS…AASL, and AITI…AWLG.

Belongs to the ADP/ATP translocase tlc family.

The protein resides in the cell membrane. In Chlamydia trachomatis serovar D (strain ATCC VR-885 / DSM 19411 / UW-3/Cx), this protein is ADP,ATP carrier protein 2 (tlcB).